Reading from the N-terminus, the 339-residue chain is WAT1-related protein At5g40210 (339 aa).

Transmembrane regions (helical) follow at residues 11–31, 42–62, 74–94, 104–124, 140–160, 168–188, 200–220, 233–253, 266–286, and 289–309; these read GWIL…NTLV, FVVL…LTFF, FSIL…QILG, TLSS…AVVF, VLGT…HGPM, WIIG…SYLV, VVVT…VSLL, FDIT…YYVI, LSMF…IFLG, and LYLG…MVLW. The 126-residue stretch at 29–154 folds into the EamA domain; it reads TLVKAATSKG…LSIIGALVVT (126 aa).

This sequence belongs to the drug/metabolite transporter (DMT) superfamily. Plant drug/metabolite exporter (P-DME) (TC 2.A.7.4) family.

The protein localises to the membrane. The chain is WAT1-related protein At5g40210 from Arabidopsis thaliana (Mouse-ear cress).